Reading from the N-terminus, the 437-residue chain is Bifunctional protein GlmU (437 aa).

Residues 1-223 (MHNTAVILAA…WDECRGVNSR (223 aa)) are pyrophosphorylase. Residues 8 to 11 (LAAG), K22, Q70, 75 to 76 (GT), 96 to 98 (YGD), G135, E149, N164, and N221 each bind UDP-N-acetyl-alpha-D-glucosamine. A Mg(2+)-binding site is contributed by D98. Residue N221 participates in Mg(2+) binding. Residues 224-244 (AELAAAEAAMQSRLRAAALAA) form a linker region. Residues 245–437 (GVTMTAPETV…AELRMTKGKR (193 aa)) are N-acetyltransferase. The UDP-N-acetyl-alpha-D-glucosamine site is built by R310 and K328. The active-site Proton acceptor is the H340. Residues Y343 and N354 each contribute to the UDP-N-acetyl-alpha-D-glucosamine site. Acetyl-CoA contacts are provided by residues A357, 363–364 (NY), S382, A400, and R417.

In the N-terminal section; belongs to the N-acetylglucosamine-1-phosphate uridyltransferase family. It in the C-terminal section; belongs to the transferase hexapeptide repeat family. In terms of assembly, homotrimer. Mg(2+) is required as a cofactor.

The protein resides in the cytoplasm. The enzyme catalyses alpha-D-glucosamine 1-phosphate + acetyl-CoA = N-acetyl-alpha-D-glucosamine 1-phosphate + CoA + H(+). It carries out the reaction N-acetyl-alpha-D-glucosamine 1-phosphate + UTP + H(+) = UDP-N-acetyl-alpha-D-glucosamine + diphosphate. It functions in the pathway nucleotide-sugar biosynthesis; UDP-N-acetyl-alpha-D-glucosamine biosynthesis; N-acetyl-alpha-D-glucosamine 1-phosphate from alpha-D-glucosamine 6-phosphate (route II): step 2/2. The protein operates within nucleotide-sugar biosynthesis; UDP-N-acetyl-alpha-D-glucosamine biosynthesis; UDP-N-acetyl-alpha-D-glucosamine from N-acetyl-alpha-D-glucosamine 1-phosphate: step 1/1. It participates in bacterial outer membrane biogenesis; LPS lipid A biosynthesis. In terms of biological role, catalyzes the last two sequential reactions in the de novo biosynthetic pathway for UDP-N-acetylglucosamine (UDP-GlcNAc). The C-terminal domain catalyzes the transfer of acetyl group from acetyl coenzyme A to glucosamine-1-phosphate (GlcN-1-P) to produce N-acetylglucosamine-1-phosphate (GlcNAc-1-P), which is converted into UDP-GlcNAc by the transfer of uridine 5-monophosphate (from uridine 5-triphosphate), a reaction catalyzed by the N-terminal domain. This is Bifunctional protein GlmU from Acidiphilium cryptum (strain JF-5).